Here is a 437-residue protein sequence, read N- to C-terminus: Sperm-associated antigen 4 protein (437 aa).

A compositionally biased stretch (low complexity) spans 1-12; that stretch reads MRRSSRPGSASS. The tract at residues 1-88 is disordered; the sequence is MRRSSRPGSA…KPAPRSHNWQ (88 aa). Polar residues-rich tracts occupy residues 19–31 and 72–88; these read NFFS…SITS and WAGS…HNWQ. The next 2 helical transmembrane spans lie at 135–155 and 166–186; these read FLSL…DVLV and FLFT…LGLL. The stretch at 197–244 forms a coiled coil; that stretch reads KEMLTLSEYHERVRSQGQQLQQLQAELDKLHKEVSTVRAANSERVAKL. Residues 265-425 enclose the SUN domain; sequence GASIDLQKTS…YRVRAHGVRT (161 aa).

As to quaternary structure, homodimer. Interacts with ODF1. May associate with microtubules. Interacts with SUN3 and SYNE1; suggesting the formation of a spermatogenesis-specific LINC complex; a SUN domain-based heterotrimer with SUN3 may associate with SYNE1. Interacts with SEPT12 and LMNB1; during spermatogenesis. As to expression, predominantly epressed in testis. Expressed in ejaculated spermatozoa (at protein level).

The protein localises to the membrane. It localises to the cytoplasm. It is found in the cytoskeleton. Its subcellular location is the flagellum axoneme. The protein resides in the nucleus envelope. The protein localises to the nucleus inner membrane. In terms of biological role, involved in spermatogenesis. Required for sperm head formation but not required to establish and maintain general polarity of the sperm head. Required for anchoring and organization of the manchette. Required for targeting of SUN3 and probably SYNE1 through a probable SUN1:SYNE3 LINC complex to the nuclear envelope and involved in accurate posterior sperm head localization of the complex. May anchor SUN3 the nuclear envelope. Involved in maintenance of the nuclear envelope integrity. May assist the organization and assembly of outer dense fibers (ODFs), a specific structure of the sperm tail. In Homo sapiens (Human), this protein is Sperm-associated antigen 4 protein (SPAG4).